Reading from the N-terminus, the 308-residue chain is Ornithine carbamoyltransferase (308 aa).

Carbamoyl phosphate contacts are provided by residues Ser-50 to Thr-53, Gln-77, Arg-101, and His-128 to Gln-131. Residues Asn-160, Asp-224, and Ser-228–Met-229 contribute to the L-ornithine site. Residues Cys-264–Leu-265 and Arg-292 contribute to the carbamoyl phosphate site.

It belongs to the aspartate/ornithine carbamoyltransferase superfamily. OTCase family.

The protein resides in the cytoplasm. It carries out the reaction carbamoyl phosphate + L-ornithine = L-citrulline + phosphate + H(+). It functions in the pathway amino-acid biosynthesis; L-arginine biosynthesis; L-arginine from L-ornithine and carbamoyl phosphate: step 1/3. Functionally, reversibly catalyzes the transfer of the carbamoyl group from carbamoyl phosphate (CP) to the N(epsilon) atom of ornithine (ORN) to produce L-citrulline. In Mycobacterium ulcerans (strain Agy99), this protein is Ornithine carbamoyltransferase.